We begin with the raw amino-acid sequence, 264 residues long: Phosphonates import ATP-binding protein PhnC (264 aa).

In terms of domain architecture, ABC transporter spans 8–255; it reads LQAENLRMTF…KLIEIYGPEF (248 aa). Position 40-47 (40-47) interacts with ATP; the sequence is GPSGSGKS.

Belongs to the ABC transporter superfamily. Phosphonates importer (TC 3.A.1.9.1) family. As to quaternary structure, the complex is composed of two ATP-binding proteins (PhnC), two transmembrane proteins (PhnE) and a solute-binding protein (PhnD).

Its subcellular location is the cell inner membrane. The enzyme catalyses phosphonate(out) + ATP + H2O = phosphonate(in) + ADP + phosphate + H(+). Part of the ABC transporter complex PhnCDE involved in phosphonates import. Responsible for energy coupling to the transport system. This is Phosphonates import ATP-binding protein PhnC from Maricaulis maris (strain MCS10) (Caulobacter maris).